We begin with the raw amino-acid sequence, 509 residues long: Maturase K (509 aa).

It belongs to the intron maturase 2 family. MatK subfamily.

It is found in the plastid. It localises to the chloroplast. Usually encoded in the trnK tRNA gene intron. Probably assists in splicing its own and other chloroplast group II introns. In Nymphaea odorata (White water lily), this protein is Maturase K.